A 307-amino-acid polypeptide reads, in one-letter code: Recombination-associated protein RdgC (307 aa).

The protein belongs to the RdgC family.

It localises to the cytoplasm. The protein resides in the nucleoid. Functionally, may be involved in recombination. The protein is Recombination-associated protein RdgC of Colwellia psychrerythraea (strain 34H / ATCC BAA-681) (Vibrio psychroerythus).